The chain runs to 540 residues: MRVNNGLTPQELEAYGISDVHDIVYNPSYDLLYQEELDPSLTGYERGVLTNLGAVAVDTGIFTGRSPKDKYIVRDDTTRDTFWWADKGKGKNDNKPLSPETWQHLKGLVTRQLSGKRLFVVDAFCGANPDTRLSVRFITEVAWQAHFVKNMFIRPSDEELAGFKPDFIVMNGAKCTNPQWKEQGLNSENFVAFNLTERMQLIGGTWYGGEMKKGMFSMMNYLLPLKGIASMHCSANVGEKGDVAVFFGLSGTGKTTLSTDPKRRLIGDDEHGWDDDGVFNFEGGCYAKTIKLSKEAEPEIYNAIRRDALLENVTVREDGTIDFDDGSKTENTRVSYPIYHIDNIVKPVSKAGHATKVIFLTADAFGVLPPVSRLTADQTQYHFLSGFTAKLAGTERGITEPTPTFSACFGAAFLSLHPTQYAEVLVKRMQAAGAQAYLVNTGWNGTGKRISIKDTRAIIDAILNGSLDNAETFTLPMFNLAIPTELPGVDTKILDPRNTYASPEQWQEKAETLAKLFIDNFDKYTDTPAGTALVAAGPKL.

Arginine 65 lines the substrate pocket. An N6-acetyllysine modification is found at lysine 87. 2 residues coordinate substrate: tyrosine 207 and lysine 213. ATP-binding positions include lysine 213, histidine 232, and 248 to 256 (GLSGTGKTT). Residues lysine 213 and histidine 232 each contribute to the Mn(2+) site. Residue aspartate 269 participates in Mn(2+) binding. Residues glutamate 297, arginine 333, 449–450 (RI), and threonine 455 contribute to the ATP site. Position 333 (arginine 333) interacts with substrate. The residue at position 523 (lysine 523) is an N6-acetyllysine.

This sequence belongs to the phosphoenolpyruvate carboxykinase (ATP) family. In terms of assembly, monomer. Requires Mn(2+) as cofactor.

The protein resides in the cytoplasm. The catalysed reaction is oxaloacetate + ATP = phosphoenolpyruvate + ADP + CO2. Its pathway is carbohydrate biosynthesis; gluconeogenesis. Functionally, involved in the gluconeogenesis. Catalyzes the conversion of oxaloacetate (OAA) to phosphoenolpyruvate (PEP) through direct phosphoryl transfer between the nucleoside triphosphate and OAA. This chain is Phosphoenolpyruvate carboxykinase (ATP), found in Shigella flexneri serotype 5b (strain 8401).